We begin with the raw amino-acid sequence, 550 residues long: Vacuolar protein 8 (550 aa).

A lipid anchor (N-myristoyl glycine) is attached at Gly-2. 2 S-palmitoyl cysteine lipidation sites follow: Cys-4 and Cys-7. ARM repeat units follow at residues 75-114 (TEKD…NLAV), 116-155 (AENK…NLAT), 157-196 (DENK…NMTH), 198-237 (YENR…NIAV), 241-280 (HRKR…NLAS), 282-321 (ERYQ…NISI), 323-363 (PLNE…NLAA), and 454-493 (FIEC…QLLE). A Phosphothreonine modification is found at Thr-548. At Ser-550 the chain carries Phosphoserine.

It belongs to the beta-catenin family.

Its subcellular location is the golgi apparatus membrane. The protein localises to the vacuole membrane. Its function is as follows. Functions in both vacuole inheritance and protein targeting from the cytoplasm to vacuole. This is Vacuolar protein 8 (vac8) from Schizosaccharomyces pombe (strain 972 / ATCC 24843) (Fission yeast).